The primary structure comprises 104 residues: Large ribosomal subunit protein bL21 (104 aa).

Belongs to the bacterial ribosomal protein bL21 family. Part of the 50S ribosomal subunit. Contacts protein L20.

This protein binds to 23S rRNA in the presence of protein L20. This chain is Large ribosomal subunit protein bL21, found in Clostridium botulinum (strain ATCC 19397 / Type A).